A 488-amino-acid polypeptide reads, in one-letter code: Probable glycine dehydrogenase (decarboxylating) subunit 2 (488 aa).

Lys274 is modified (N6-(pyridoxal phosphate)lysine).

Belongs to the GcvP family. C-terminal subunit subfamily. The glycine cleavage system is composed of four proteins: P, T, L and H. In this organism, the P 'protein' is a heterodimer of two subunits. The cofactor is pyridoxal 5'-phosphate.

It catalyses the reaction N(6)-[(R)-lipoyl]-L-lysyl-[glycine-cleavage complex H protein] + glycine + H(+) = N(6)-[(R)-S(8)-aminomethyldihydrolipoyl]-L-lysyl-[glycine-cleavage complex H protein] + CO2. Functionally, the glycine cleavage system catalyzes the degradation of glycine. The P protein binds the alpha-amino group of glycine through its pyridoxal phosphate cofactor; CO(2) is released and the remaining methylamine moiety is then transferred to the lipoamide cofactor of the H protein. This chain is Probable glycine dehydrogenase (decarboxylating) subunit 2, found in Listeria welshimeri serovar 6b (strain ATCC 35897 / DSM 20650 / CCUG 15529 / CIP 8149 / NCTC 11857 / SLCC 5334 / V8).